The primary structure comprises 691 residues: DNA ligase (691 aa).

NAD(+)-binding positions include 41-45 (DAEYD), 90-91 (SL), and Glu130. Lys132 serves as the catalytic N6-AMP-lysine intermediate. NAD(+)-binding residues include Arg153, Glu190, Lys307, and Lys331. Residues Cys425, Cys428, Cys443, and Cys449 each contribute to the Zn(2+) site. The 82-residue stretch at 610–691 (APQGVLAGKT…LHQLLEGNTP (82 aa)) folds into the BRCT domain.

It belongs to the NAD-dependent DNA ligase family. LigA subfamily. Mg(2+) serves as cofactor. It depends on Mn(2+) as a cofactor.

It carries out the reaction NAD(+) + (deoxyribonucleotide)n-3'-hydroxyl + 5'-phospho-(deoxyribonucleotide)m = (deoxyribonucleotide)n+m + AMP + beta-nicotinamide D-nucleotide.. Functionally, DNA ligase that catalyzes the formation of phosphodiester linkages between 5'-phosphoryl and 3'-hydroxyl groups in double-stranded DNA using NAD as a coenzyme and as the energy source for the reaction. It is essential for DNA replication and repair of damaged DNA. The sequence is that of DNA ligase from Burkholderia ambifaria (strain ATCC BAA-244 / DSM 16087 / CCUG 44356 / LMG 19182 / AMMD) (Burkholderia cepacia (strain AMMD)).